Reading from the N-terminus, the 626-residue chain is Carnitine O-acetyltransferase (626 aa).

K93 carries the post-translational modification N6-succinyllysine. K261 is subject to N6-acetyllysine; alternate. Position 261 is an N6-succinyllysine; alternate (K261). At K268 the chain carries N6-acetyllysine. The active-site Proton acceptor is H343. Residues K419 and 423–430 (KSEKLSPD) each bind CoA. 2 residues coordinate (R)-carnitine: Y452 and S454. S456 serves as a coordination point for CoA. Residue T465 coordinates (R)-carnitine. CoA is bound by residues R504 and Q555. Residues 624–626 (AKL) carry the Microbody targeting signal motif.

It belongs to the carnitine/choline acetyltransferase family. Monomer. In terms of tissue distribution, mostly in skeletal muscle, less in heart, liver and pancreas, only weakly detectable in brain, placenta, lung and kidney.

It localises to the endoplasmic reticulum. It is found in the peroxisome. The protein resides in the mitochondrion inner membrane. The protein localises to the mitochondrion. The enzyme catalyses (R)-carnitine + acetyl-CoA = O-acetyl-(R)-carnitine + CoA. It catalyses the reaction propanoyl-CoA + (R)-carnitine = O-propanoyl-(R)-carnitine + CoA. It carries out the reaction butanoyl-CoA + (R)-carnitine = O-butanoyl-(R)-carnitine + CoA. The catalysed reaction is hexanoyl-CoA + (R)-carnitine = O-hexanoyl-(R)-carnitine + CoA. The enzyme catalyses octanoyl-CoA + (R)-carnitine = O-octanoyl-(R)-carnitine + CoA. It catalyses the reaction decanoyl-CoA + (R)-carnitine = O-decanoyl-(R)-carnitine + CoA. It carries out the reaction 3-methylbutanoyl-CoA + (R)-carnitine = O-3-methylbutanoyl-(R)-carnitine + CoA. The catalysed reaction is 2-methylpropanoyl-CoA + (R)-carnitine = O-isobutanoyl-(R)-carnitine + CoA. The enzyme catalyses 2-methylbutanoyl-CoA + (R)-carnitine = O-2-methylbutanoyl-(R)-carnitine + CoA. It catalyses the reaction acetoacetyl-CoA + (R)-carnitine = O-3-oxobutanoyl-(R)-carnitine + CoA. It carries out the reaction 3-hydroxybutanoyl-CoA + (R)-carnitine = O-3-hydroxybutanoyl-(R)-carnitine + CoA. The catalysed reaction is 4,8-dimethylnonanoyl-CoA + (R)-carnitine = O-4,8-dimethylnonanoyl-(R)-carnitine + CoA. The enzyme catalyses 2,6-dimethylheptanoyl-CoA + (R)-carnitine = O-2,6-dimethylheptanoyl-(R)-carnitine + CoA. Catalyzes the reversible transfer of acyl groups from carnitine to coenzyme A (CoA) and regulates the acyl-CoA/CoA ratio. Also plays a crucial role in the transport of fatty acids for beta-oxidation. Responsible for the synthesis of short- and branched-chain acylcarnitines. Active towards some branched-chain amino acid oxidation pathway (BCAAO) intermediates. Trans-2-enoyl-CoAs and 2-methylacyl-CoAs are poor substrates. The polypeptide is Carnitine O-acetyltransferase (Homo sapiens (Human)).